The primary structure comprises 455 residues: MVRLFGTDGVRGVANIDLTAEQALSLASAAVEVLAGPNRTSGPSGRGKPVVVVGRDTRPSGEFLEAAVVAGLAASGADVARIGVAPTPAVAHAVAASGAMFGVMLSASHNPMPDNGIKLFAAGGLKLPDEVEDAIERRMALPPSRRPVGADVGRVRDEPVLLDRYAAHLLATLPVPLDGLRVVVDCAQGAASTLAPRVLRAAGADVVALHADGDGIAINDGSGATHLDSLRAAVVAHGADVGIAHDGDADRCLAVDATGEVVDGDQILAMCALALAERGELVDDTVVVTVMSNLGFHHAMREAGITVVTTPVGDRYVLETMRAGGYVLGGEQSGHVVFLDHATTGDGLLTALRILGRVAETGQPLGELTKAMTRLPQVLVNVRGVDRTQVDTNEELLRAVALAKAELGDEGRVLLRSSGTEPLVRVMVEAGTDAAARAVAQRLAAVVRTALPPAR.

Catalysis depends on Ser108, which acts as the Phosphoserine intermediate. Mg(2+) is bound by residues Ser108, Asp246, Asp248, and Asp250. The residue at position 108 (Ser108) is a Phosphoserine.

Belongs to the phosphohexose mutase family. Mg(2+) serves as cofactor. Post-translationally, activated by phosphorylation.

The enzyme catalyses alpha-D-glucosamine 1-phosphate = D-glucosamine 6-phosphate. In terms of biological role, catalyzes the conversion of glucosamine-6-phosphate to glucosamine-1-phosphate. The protein is Phosphoglucosamine mutase of Frankia casuarinae (strain DSM 45818 / CECT 9043 / HFP020203 / CcI3).